The sequence spans 223 residues: 26S proteasome non-ATPase regulatory subunit 9 (223 aa).

Residues arginine 103–serine 121 show a composition bias toward basic and acidic residues. The disordered stretch occupies residues arginine 103–serine 141. A PDZ domain is found at glutamine 108–arginine 195. At serine 129 the chain carries Phosphoserine.

It belongs to the proteasome subunit p27 family. As to quaternary structure, interacts with PSMC3. Part of a transient complex (modulator) containing PSMD9, PSMC6 and PSMC3 formed during the assembly of the 26S proteasome. As to expression, expressed in all tissues tested, highly expressed in liver and kidney.

Its function is as follows. Acts as a chaperone during the assembly of the 26S proteasome, specifically of the base subcomplex of the PA700/19S regulatory complex (RC). During the base subcomplex assembly is part of an intermediate PSMD9:PSMC6:PSMC3 module, also known as modulator trimer complex; PSMD9 is released during the further base assembly process. The sequence is that of 26S proteasome non-ATPase regulatory subunit 9 (PSMD9) from Homo sapiens (Human).